Reading from the N-terminus, the 897-residue chain is Leucine--tRNA ligase (897 aa).

The short motif at 42–52 is the 'HIGH' region element; sequence PYPSGKLHMGH. Residues 645–649 carry the 'KMSKS' region motif; it reads TMSKS. K648 contacts ATP.

Belongs to the class-I aminoacyl-tRNA synthetase family.

It is found in the cytoplasm. It carries out the reaction tRNA(Leu) + L-leucine + ATP = L-leucyl-tRNA(Leu) + AMP + diphosphate. The chain is Leucine--tRNA ligase from Paracidovorax citrulli (strain AAC00-1) (Acidovorax citrulli).